Consider the following 244-residue polypeptide: 7-cyano-7-deazaguanine synthase (244 aa).

14-24 (FSGGQDSATCL) is a binding site for ATP. Zn(2+) is bound by residues C202, C217, C220, and C223.

This sequence belongs to the QueC family. Requires Zn(2+) as cofactor.

The enzyme catalyses 7-carboxy-7-deazaguanine + NH4(+) + ATP = 7-cyano-7-deazaguanine + ADP + phosphate + H2O + H(+). It functions in the pathway purine metabolism; 7-cyano-7-deazaguanine biosynthesis. Its function is as follows. Catalyzes the ATP-dependent conversion of 7-carboxy-7-deazaguanine (CDG) to 7-cyano-7-deazaguanine (preQ(0)). The protein is 7-cyano-7-deazaguanine synthase of Paraburkholderia phytofirmans (strain DSM 17436 / LMG 22146 / PsJN) (Burkholderia phytofirmans).